Consider the following 397-residue polypeptide: Lysophospholipid transporter LplT (397 aa).

11 helical membrane-spanning segments follow: residues 16–36, 53–73, 91–111, 139–159, 164–184, 227–247, 253–273, 281–301, 305–325, 352–372, and 373–393; these read MLAV…LLFA, VLQM…GQFA, LGAG…LVGI, LMES…GILA, LAAL…NLWI, LFWG…PVAL, AMPT…AGAA, TVSR…AFAV, LLPA…FIVP, NVAM…GVPP, and VAVG…LWVW.

The protein belongs to the major facilitator superfamily. LplT (TC 2.A.1.42) family.

The protein resides in the cell inner membrane. Its function is as follows. Catalyzes the facilitated diffusion of 2-acyl-glycero-3-phosphoethanolamine (2-acyl-GPE) into the cell. In Klebsiella pneumoniae subsp. pneumoniae (strain ATCC 700721 / MGH 78578), this protein is Lysophospholipid transporter LplT.